A 68-amino-acid polypeptide reads, in one-letter code: Protein SlyX homolog (68 aa).

This sequence belongs to the SlyX family.

In Pseudomonas syringae pv. tomato (strain ATCC BAA-871 / DC3000), this protein is Protein SlyX homolog.